An 843-amino-acid polypeptide reads, in one-letter code: Glycogen phosphorylase, brain form (843 aa).

A2 carries the post-translational modification N-acetylalanine. S15 carries the post-translational modification Phosphoserine; by PHK; in form phosphorylase A. Positions 43, 197, and 310 each coordinate AMP. Y197 carries the post-translational modification Phosphotyrosine. At Y473 the chain carries Phosphotyrosine. K569 is a pyridoxal 5'-phosphate binding site. The tract at residues T677 to G678 is pyridoxal 5'-phosphate. K681 is modified (N6-(pyridoxal phosphate)lysine).

Belongs to the glycogen phosphorylase family. In terms of assembly, homodimer. Dimers associate into a tetramer to form the enzymatically active phosphorylase A. Pyridoxal 5'-phosphate is required as a cofactor. Post-translationally, phosphorylation of Ser-15 converts phosphorylase B (unphosphorylated) to phosphorylase A.

It carries out the reaction [(1-&gt;4)-alpha-D-glucosyl](n) + phosphate = [(1-&gt;4)-alpha-D-glucosyl](n-1) + alpha-D-glucose 1-phosphate. Its activity is regulated as follows. Activity of phosphorylase is controlled both by allosteric means (through the non-covalent binding of metabolites) and by covalent modification. Thus AMP allosterically activates, whereas ATP, ADP, and glucose-6-phosphate allosterically inhibit, phosphorylase B. Its function is as follows. Glycogen phosphorylase that regulates glycogen mobilization. Phosphorylase is an important allosteric enzyme in carbohydrate metabolism. Enzymes from different sources differ in their regulatory mechanisms and in their natural substrates. However, all known phosphorylases share catalytic and structural properties. This Pongo abelii (Sumatran orangutan) protein is Glycogen phosphorylase, brain form (PYGB).